The primary structure comprises 71 residues: Ceratotoxin-D (71 aa).

The first 23 residues, 1 to 23, serve as a signal peptide directing secretion; sequence MANLKAVFLICILAFIAFHCVVG. Positions 24–35 are excised as a propeptide; that stretch reads APTAEDSIVVKR.

In terms of assembly, homomer of four to six subunits.

It localises to the secreted. In terms of biological role, female-specific peptides with potent activity against Gram-positive and Gram-negative bacteria. They have as well hemolytic activity. The chain is Ceratotoxin-D (CTXD) from Ceratitis capitata (Mediterranean fruit fly).